The sequence spans 1938 residues: Myosin-1 (1938 aa).

In terms of domain architecture, Myosin N-terminal SH3-like spans 33-82; sequence DAKTSVFVADPKESFVKATVQSREGGKVTAKTEAGATVTVKEDQCFPMNP. A phosphothreonine mark is found at Thr-64 and Thr-69. One can recognise a Myosin motor domain in the interval 86–781; sequence DKIEDMAMMT…LLGLLEEMRD (696 aa). Residue Lys-130 is modified to N6,N6,N6-trimethyllysine. 179-186 is an ATP binding site; that stretch reads GESGAGKT. Tyr-389 carries the phosphotyrosine modification. Thr-419 bears the Phosphothreonine mark. Phosphotyrosine is present on Tyr-424. Ser-625 carries the phosphoserine modification. Residues 658–680 are actin-binding; the sequence is LNKLMTNLRSTHPHFVRCIIPNE. At His-756 the chain carries Pros-methylhistidine. Residues 760 to 774 are actin-binding; it reads KFGHTKVFFKAGLLG. The IQ domain occupies 784-813; it reads LAQIITRTQARCRGFLARVEYQRMVERRES. The stretch at 842-1938 forms a coiled coil; that stretch reads LLKSAETEKE…EVHTKIISEE (1097 aa). Phosphoserine is present on residues Ser-1091 and Ser-1095. Disordered stretches follow at residues 1124 to 1146 and 1152 to 1171; these read EIEA…SREL and RLEE…KKRE. The segment covering 1127–1146 has biased composition (basic and acidic residues); it reads AERASRAKAEKQRSDLSREL. 2 positions are modified to phosphoserine: Ser-1161 and Ser-1236. Phosphothreonine is present on Thr-1240. The residue at position 1242 (Ser-1242) is a Phosphoserine. At Thr-1254 the chain carries Phosphothreonine. At Ser-1260 the chain carries Phosphoserine. Residue Thr-1285 is modified to Phosphothreonine. Ser-1291, Ser-1302, and Ser-1305 each carry phosphoserine. Tyr-1463 carries the phosphotyrosine modification. A Phosphothreonine modification is found at Thr-1466. Residue Ser-1473 is modified to Phosphoserine. A Phosphotyrosine modification is found at Tyr-1491. Ser-1494 is subject to Phosphoserine. Thr-1500 carries the post-translational modification Phosphothreonine. Phosphoserine is present on Ser-1513. Thr-1516 bears the Phosphothreonine mark. Phosphoserine occurs at positions 1541, 1553, 1573, 1713, and 1725. Phosphothreonine is present on residues Thr-1729 and Thr-1735. Ser-1738 carries the phosphoserine modification.

It belongs to the TRAFAC class myosin-kinesin ATPase superfamily. Myosin family. In terms of assembly, muscle myosin is a hexameric protein that consists of 2 heavy chain subunits (MHC), 2 alkali light chain subunits (MLC) and 2 regulatory light chain subunits (MLC-2). Interacts with SLC26A5.

It localises to the cytoplasm. The protein resides in the myofibril. Required for normal hearing. It plays a role in cochlear amplification of auditory stimuli, likely through the positive regulation of prestin (SLC26A5) activity and outer hair cell (OHC) electromotility. In Equus caballus (Horse), this protein is Myosin-1 (MYH1).